We begin with the raw amino-acid sequence, 493 residues long: Flagellin (493 aa).

This sequence belongs to the bacterial flagellin family.

It is found in the secreted. The protein resides in the bacterial flagellum. Its function is as follows. Flagellin is the subunit protein which polymerizes to form the filaments of bacterial flagella. This is Flagellin (fliC) from Salmonella rubislaw.